The sequence spans 289 residues: Cyclin-dependent kinase 2 homolog (289 aa).

In terms of domain architecture, Protein kinase spans 4 to 285; sequence YHGLEKIGEG…AKQAIEHPYF (282 aa). ATP contacts are provided by residues 10–18 and lysine 32; that span reads IGEGTYGVV. Residue threonine 14 is modified to Phosphothreonine. Tyrosine 15 carries the post-translational modification Phosphotyrosine. The active-site Proton acceptor is the aspartate 126. Residue threonine 159 is modified to Phosphothreonine.

The protein belongs to the protein kinase superfamily. CMGC Ser/Thr protein kinase family. CDC2/CDKX subfamily. In terms of assembly, may form a complex composed of at least the catalytic subunit CRK2 and a cyclin. The cofactor is Mg(2+).

The protein resides in the cytoplasm. The enzyme catalyses L-seryl-[protein] + ATP = O-phospho-L-seryl-[protein] + ADP + H(+). The catalysed reaction is L-threonyl-[protein] + ATP = O-phospho-L-threonyl-[protein] + ADP + H(+). It catalyses the reaction [DNA-directed RNA polymerase] + ATP = phospho-[DNA-directed RNA polymerase] + ADP + H(+). With respect to regulation, phosphorylation at Thr-14 or Tyr-15 inactivates the enzyme, while phosphorylation at Thr-159 activates it. Its function is as follows. Serine/threonine-protein kinase. Involved in the control of the cell cycle. Required for entry into S-phase and mitosis. Probable component of the kinase complex that phosphorylates the repetitive C-terminus of RNA polymerase II. The protein is Cyclin-dependent kinase 2 homolog of Plasmodium yoelii yoelii.